The sequence spans 176 residues: Adenine phosphoribosyltransferase (176 aa).

Belongs to the purine/pyrimidine phosphoribosyltransferase family. As to quaternary structure, homodimer.

It is found in the cytoplasm. It catalyses the reaction AMP + diphosphate = 5-phospho-alpha-D-ribose 1-diphosphate + adenine. Its pathway is purine metabolism; AMP biosynthesis via salvage pathway; AMP from adenine: step 1/1. In terms of biological role, catalyzes a salvage reaction resulting in the formation of AMP, that is energically less costly than de novo synthesis. The polypeptide is Adenine phosphoribosyltransferase (Leuconostoc mesenteroides subsp. mesenteroides (strain ATCC 8293 / DSM 20343 / BCRC 11652 / CCM 1803 / JCM 6124 / NCDO 523 / NBRC 100496 / NCIMB 8023 / NCTC 12954 / NRRL B-1118 / 37Y)).